Consider the following 390-residue polypeptide: S-adenosylmethionine synthase 2 (390 aa).

Position 9 (Glu9) interacts with Mg(2+). Residue His15 participates in ATP binding. Glu43 is a binding site for K(+). L-methionine-binding residues include Glu56 and Gln99. ATP-binding positions include 167–169 (DGK), 235–238 (SGRF), Asp246, 252–253 (RK), Ala269, Lys273, and Lys277. Position 246 (Asp246) interacts with L-methionine. Lys277 contributes to the L-methionine binding site.

This sequence belongs to the AdoMet synthase family. In terms of assembly, homotetramer. Mn(2+) serves as cofactor. Mg(2+) is required as a cofactor. The cofactor is Co(2+). Requires K(+) as cofactor.

The protein resides in the cytoplasm. It catalyses the reaction L-methionine + ATP + H2O = S-adenosyl-L-methionine + phosphate + diphosphate. It functions in the pathway amino-acid biosynthesis; S-adenosyl-L-methionine biosynthesis; S-adenosyl-L-methionine from L-methionine: step 1/1. Its function is as follows. Catalyzes the formation of S-adenosylmethionine from methionine and ATP. The reaction comprises two steps that are both catalyzed by the same enzyme: formation of S-adenosylmethionine (AdoMet) and triphosphate, and subsequent hydrolysis of the triphosphate. This chain is S-adenosylmethionine synthase 2 (METK2), found in Solanum tuberosum (Potato).